The following is a 106-amino-acid chain: uncharacterized protein (106 aa).

Belongs to the HesB/IscA family.

This is an uncharacterized protein from Cereibacter sphaeroides (Rhodobacter sphaeroides).